The primary structure comprises 493 residues: Angiopoietin-related protein 2 (493 aa).

The N-terminal stretch at methionine 1 to alanine 19 is a signal peptide. Coiled-coil stretches lie at residues glutamate 77–glycine 115 and alanine 152–glutamate 202. Residues asparagine 164 and asparagine 192 are each glycosylated (N-linked (GlcNAc...) asparagine). The Fibrinogen C-terminal domain maps to aspartate 269–proline 489. Intrachain disulfides connect cysteine 278-cysteine 307 and cysteine 430-cysteine 443.

Widely expressed in heart, tongue, lung and skeletal muscle. Also found in lower levels in kidney, epididymis and testis.

The protein localises to the secreted. Functionally, induces sprouting in endothelial cells through an autocrine and paracrine action. This is Angiopoietin-related protein 2 (Angptl2) from Mus musculus (Mouse).